A 463-amino-acid chain; its full sequence is Phosphoglucosamine mutase (463 aa).

The Phosphoserine intermediate role is filled by Ser108. Residues Ser108, Asp247, Asp249, and Asp251 each coordinate Mg(2+). Ser108 is modified (phosphoserine).

It belongs to the phosphohexose mutase family. Requires Mg(2+) as cofactor. In terms of processing, activated by phosphorylation.

It catalyses the reaction alpha-D-glucosamine 1-phosphate = D-glucosamine 6-phosphate. Its function is as follows. Catalyzes the conversion of glucosamine-6-phosphate to glucosamine-1-phosphate. The sequence is that of Phosphoglucosamine mutase from Nitrosospira multiformis (strain ATCC 25196 / NCIMB 11849 / C 71).